The chain runs to 296 residues: Cell division protein DivIB (296 aa).

Over 1–25 (MMEDKIIHTPRFDEQRRMRRKKRQR) the chain is Cytoplasmic. The helical transmembrane segment at 26-46 (LQLFIFLSIVAIVSLILIYMF) threads the bilayer. The Extracellular portion of the chain corresponds to 47–296 (TSISYVKKIS…KELNQVKKNS (250 aa)). The 69-residue stretch at 50–118 (SYVKKISVND…NTVSINVEEY (69 aa)) folds into the POTRA domain.

Belongs to the FtsQ/DivIB family. DivIB subfamily.

The protein resides in the cell membrane. Functionally, cell division protein that may be involved in stabilizing or promoting the assembly of the division complex. This Macrococcus caseolyticus (strain JCSC5402) (Macrococcoides caseolyticum) protein is Cell division protein DivIB.